Here is a 1968-residue protein sequence, read N- to C-terminus: RNA replication polyprotein (1968 aa).

The 192-residue stretch at 63 to 254 (SPYSAVVHSH…YQQPLKGGYL (192 aa)) folds into the Alphavirus-like MT domain. In terms of domain architecture, OTU spans 883 to 991 (YKRVSGPGDG…SEHYEPQVLR (109 aa)). Positions 990 to 1080 (LRNGCVIESV…ISDEHMSFCG (91 aa)) constitute a Peptidase C23 domain. Active-site residues include Cys-994 and His-1075. Positions 1134–1316 (ATGVLGSALF…KVRSHRFLNC (183 aa)) constitute a (+)RNA virus helicase ATP-binding domain. 1166 to 1173 (GTFGSGKS) serves as a coordination point for ATP. Positions 1317-1454 (NFIGRLPCEI…CKTAIPDDLN (138 aa)) constitute a (+)RNA virus helicase C-terminal domain. The region spanning 1749 to 1856 (RICTESDYEA…SRRLQPTKKF (108 aa)) is the RdRp catalytic domain.

Belongs to the potexviruses/carlaviruses RNA replication protein family. Specific enzymatic cleavages by the viral protease yield mature proteins.

It carries out the reaction RNA(n) + a ribonucleoside 5'-triphosphate = RNA(n+1) + diphosphate. The catalysed reaction is ATP + H2O = ADP + phosphate + H(+). Its function is as follows. RNA-directed RNA polymerase involved in viral RNA replication. Protease: Thiol protease that cleaves the polyprotein. The polypeptide is RNA replication polyprotein (Solanum tuberosum (Potato)).